Reading from the N-terminus, the 537-residue chain is Chaperonin GroEL 2 (537 aa).

Residues 29–32, 86–90, G413, 477–479, and D493 contribute to the ATP site; these read TLGP, DGTTT, and NAA.

It belongs to the chaperonin (HSP60) family. In terms of assembly, forms a cylinder of 14 subunits composed of two heptameric rings stacked back-to-back. Interacts with the co-chaperonin GroES.

It is found in the cytoplasm. The catalysed reaction is ATP + H2O + a folded polypeptide = ADP + phosphate + an unfolded polypeptide.. Together with its co-chaperonin GroES, plays an essential role in assisting protein folding. The GroEL-GroES system forms a nano-cage that allows encapsulation of the non-native substrate proteins and provides a physical environment optimized to promote and accelerate protein folding. In Thermobifida fusca (strain YX), this protein is Chaperonin GroEL 2.